We begin with the raw amino-acid sequence, 300 residues long: Acetaldehyde dehydrogenase 1 (300 aa).

11–14 (SGNI) serves as a coordination point for NAD(+). C126 acts as the Acyl-thioester intermediate in catalysis. NAD(+) contacts are provided by residues 157–165 (SAGPGTRAN) and N276.

This sequence belongs to the acetaldehyde dehydrogenase family.

The enzyme catalyses acetaldehyde + NAD(+) + CoA = acetyl-CoA + NADH + H(+). The polypeptide is Acetaldehyde dehydrogenase 1 (Rhodococcus erythropolis (strain PR4 / NBRC 100887)).